Here is a 308-residue protein sequence, read N- to C-terminus: UPF0026 protein jhp_0109 (308 aa).

The Radical SAM core domain maps to 18-247; the sequence is FGKSLGVDLS…VSLPKRSTAQ (230 aa). [4Fe-4S] cluster contacts are provided by Cys33, Cys37, and Cys40.

This sequence belongs to the UPF0026 family. Requires [4Fe-4S] cluster as cofactor.

The sequence is that of UPF0026 protein jhp_0109 from Helicobacter pylori (strain J99 / ATCC 700824) (Campylobacter pylori J99).